Consider the following 286-residue polypeptide: Transcriptional regulator of yeast form adherence 4 (286 aa).

2 stretches are compositionally biased toward low complexity: residues 1 to 29 (MSLP…PPSS) and 37 to 65 (LSTS…TTTN). The tract at residues 1–71 (MSLPMSPVSP…TTTNYGTKTP (71 aa)) is disordered. 2 C2H2-type zinc fingers span residues 78-101 (FNCT…LSTH) and 107-130 (FTCG…KNLH). The segment at 146 to 260 (HCNKDNDSKS…ITNSSTSHIH (115 aa)) is disordered. 2 stretches are compositionally biased toward low complexity: residues 156–165 (GSDSNTNKTN) and 228–244 (SVPS…PTST). Over residues 245–260 (NNDTASITNSSTSHIH) the composition is skewed to polar residues.

It is found in the nucleus. Transcription factor required for yeast cell adherence to silicone substrate. The chain is Transcriptional regulator of yeast form adherence 4 (TRY4) from Candida albicans (strain SC5314 / ATCC MYA-2876) (Yeast).